The sequence spans 478 residues: ATP synthase subunit beta (478 aa).

An ATP-binding site is contributed by 164-171; that stretch reads GGAGVGKT.

The protein belongs to the ATPase alpha/beta chains family. F-type ATPases have 2 components, CF(1) - the catalytic core - and CF(0) - the membrane proton channel. CF(1) has five subunits: alpha(3), beta(3), gamma(1), delta(1), epsilon(1). CF(0) has three main subunits: a(1), b(2) and c(9-12). The alpha and beta chains form an alternating ring which encloses part of the gamma chain. CF(1) is attached to CF(0) by a central stalk formed by the gamma and epsilon chains, while a peripheral stalk is formed by the delta and b chains.

The protein localises to the cell membrane. The enzyme catalyses ATP + H2O + 4 H(+)(in) = ADP + phosphate + 5 H(+)(out). In terms of biological role, produces ATP from ADP in the presence of a proton gradient across the membrane. The catalytic sites are hosted primarily by the beta subunits. The protein is ATP synthase subunit beta of Streptomyces coelicolor (strain ATCC BAA-471 / A3(2) / M145).